We begin with the raw amino-acid sequence, 499 residues long: Cryptochrome-1 (499 aa).

Residues Arg190, Ser218, Ser220, Gln261, His328, 360-362 (DAD), Cys366, and Asn369 each bind FAD.

Belongs to the DNA photolyase class-1 family. Interacts with tim and per; promoted by light conditions. FAD is required as a cofactor.

It localises to the cytoplasm. The protein localises to the perinuclear region. It is found in the nucleus. Blue light-dependent regulator that is the input of the circadian feedback loop. Has no photolyase activity for cyclobutane pyrimidine dimers or 6-4 photoproducts. Regulation of expression by light suggests a role in photoreception for locomotor activity rhythms. Functions, together with per, as a transcriptional repressor required for the oscillation of peripheral circadian clocks and for the correct specification of clock cells. Genes directly activated by the transcription factors Clock (Clk) and cycle (cyc) are repressed by cry. This chain is Cryptochrome-1, found in Culex quinquefasciatus (Southern house mosquito).